Reading from the N-terminus, the 465-residue chain is tRNA modification GTPase MnmE (465 aa).

3 residues coordinate (6S)-5-formyl-5,6,7,8-tetrahydrofolate: Arg24, Glu84, and Lys127. The TrmE-type G domain occupies 223 to 383 (GLNIVLAGQP…LRGELLRLIG (161 aa)). Asn233 contacts K(+). Residues 233 to 238 (NVGKSS), 252 to 258 (TAIAGTT), and 277 to 280 (DTAG) contribute to the GTP site. Residue Ser237 participates in Mg(2+) binding. The K(+) site is built by Thr252, Ile254, and Thr257. Thr258 contacts Mg(2+). Lys465 is a (6S)-5-formyl-5,6,7,8-tetrahydrofolate binding site.

This sequence belongs to the TRAFAC class TrmE-Era-EngA-EngB-Septin-like GTPase superfamily. TrmE GTPase family. As to quaternary structure, homodimer. Heterotetramer of two MnmE and two MnmG subunits. Requires K(+) as cofactor.

The protein resides in the cytoplasm. Its function is as follows. Exhibits a very high intrinsic GTPase hydrolysis rate. Involved in the addition of a carboxymethylaminomethyl (cmnm) group at the wobble position (U34) of certain tRNAs, forming tRNA-cmnm(5)s(2)U34. The polypeptide is tRNA modification GTPase MnmE (Janthinobacterium sp. (strain Marseille) (Minibacterium massiliensis)).